Consider the following 593-residue polypeptide: Zinc metalloproteinase-disintegrin-like atrase-B (593 aa).

The signal sequence occupies residues 1–20 (MIQALLVIICLAVFPHQGSS). Residues 21 to 191 (IILESGNVND…DESIEKTSQL (171 aa)) constitute a propeptide that is removed on maturation. Residues 205–400 (KYIEFYVIVD…DRPQCILNKP (196 aa)) enclose the Peptidase M12B domain. Residues E208 and D292 each coordinate Ca(2+). Cystine bridges form between C316-C395, C356-C379, and C358-C363. An N-linked (GlcNAc...) asparagine glycan is attached at N319. A Zn(2+)-binding site is contributed by H341. The active site involves E342. The Zn(2+) site is built by H345 and H351. Ca(2+) contacts are provided by C395, N398, I410, N413, F415, E417, E420, and D423. The Disintegrin domain maps to 408 to 477 (PPICGNYFVE…ECPTDSLQRN (70 aa)). 11 disulfides stabilise this stretch: C422-C435, C424-C430, C434-C440, C449-C469, C456-C488, C481-C493, C500-C550, C515-C558, C528-C538, C545-C581, and C575-C586. A D/ECD-tripeptide motif is present at residues 455-457 (DCD). Ca(2+)-binding residues include D457, L458, E460, and D472. N490 carries N-linked (GlcNAc...) asparagine glycosylation.

Belongs to the venom metalloproteinase (M12B) family. P-III subfamily. P-IIIa sub-subfamily. As to quaternary structure, monomer. Zn(2+) is required as a cofactor. In terms of tissue distribution, expressed by the venom gland.

Its subcellular location is the secreted. Its activity is regulated as follows. Inhibited by EDTA, EGTA, 1,10-phenanthroline and DTT. Not inhibited by PMSF and SBTI. Functionally, snake venom zinc protease that inhibits the classical and alternative pathways of complement by cleaving factor B, C6, C7, and C8. Also slowly and selectively degrades alpha-chain of fibrinogen (FGA), and shows edema-inducing activity. This Naja atra (Chinese cobra) protein is Zinc metalloproteinase-disintegrin-like atrase-B.